Consider the following 351-residue polypeptide: Transaldolase (351 aa).

The active-site Schiff-base intermediate with substrate is the Lys-138.

This sequence belongs to the transaldolase family. Type 2 subfamily.

The protein resides in the cytoplasm. The enzyme catalyses D-sedoheptulose 7-phosphate + D-glyceraldehyde 3-phosphate = D-erythrose 4-phosphate + beta-D-fructose 6-phosphate. It participates in carbohydrate degradation; pentose phosphate pathway; D-glyceraldehyde 3-phosphate and beta-D-fructose 6-phosphate from D-ribose 5-phosphate and D-xylulose 5-phosphate (non-oxidative stage): step 2/3. In terms of biological role, transaldolase is important for the balance of metabolites in the pentose-phosphate pathway. In Neisseria meningitidis serogroup A / serotype 4A (strain DSM 15465 / Z2491), this protein is Transaldolase (tal).